The chain runs to 415 residues: Gamma-glutamyl phosphate reductase (415 aa).

It belongs to the gamma-glutamyl phosphate reductase family.

The protein localises to the cytoplasm. It carries out the reaction L-glutamate 5-semialdehyde + phosphate + NADP(+) = L-glutamyl 5-phosphate + NADPH + H(+). Its pathway is amino-acid biosynthesis; L-proline biosynthesis; L-glutamate 5-semialdehyde from L-glutamate: step 2/2. Its function is as follows. Catalyzes the NADPH-dependent reduction of L-glutamate 5-phosphate into L-glutamate 5-semialdehyde and phosphate. The product spontaneously undergoes cyclization to form 1-pyrroline-5-carboxylate. This chain is Gamma-glutamyl phosphate reductase, found in Mycolicibacterium vanbaalenii (strain DSM 7251 / JCM 13017 / BCRC 16820 / KCTC 9966 / NRRL B-24157 / PYR-1) (Mycobacterium vanbaalenii).